The primary structure comprises 1429 residues: Autophagy-related protein 11 (1429 aa).

Coiled-coil stretches lie at residues 540–579, 616–808, 842–985, and 1106–1135; these read GDDD…QSQA, EGID…LDDH, TLVE…HMNS, and RRIK…LQKD. Residues 574–622 form a disordered region; sequence HRQSQASRPGNLFQPQGSQQRERVNSASSVRSSRFDDRRRSSEGIDPLM. The segment covering 575-592 has biased composition (polar residues); the sequence is RQSQASRPGNLFQPQGSQ. Positions 606–616 are enriched in basic and acidic residues; sequence SRFDDRRRSSE. Disordered regions lie at residues 1205–1224 and 1333–1405; these read SKSL…ENDN and RAHN…PTRR. 2 stretches are compositionally biased toward polar residues: residues 1206–1215 and 1333–1362; these read KSLQPSSETE and RAHN…GQKN. Positions 1384–1398 are enriched in basic and acidic residues; that stretch reads KADEQPRSVVQREDS.

It belongs to the ATG11 family. In terms of assembly, homodimer and potential homooligomers. Interacts with ATG1 kinase and the ATG19 and ATG34 cargo protein transporters. Interacts with ATG9, ATG17 and ATG20.

The protein localises to the preautophagosomal structure membrane. Its subcellular location is the vacuole membrane. Involved in cytoplasm to vacuole transport (Cvt), pexophagy, mitophagy and nucleophagy. Recruits mitochondria for their selective degradation via autophagy (mitophagy) during starvation, through its interaction with ATG32. Works as scaffold proteins that recruit ATG proteins to the pre-autophagosome (PAS), the site of vesicle/autophagosome formation. Required for ATG9 anterograde transport from the mitochondria to the PAS. Also recruits the ATG19-prAPE1 complex to the PAS. Required for the Cvt vesicles completion. Autophagy is required for proper vegetative growth, asexual/sexual reproduction, and full virulence. Autophagy is particularly involved in the biosynthesis of deoxynivalenol (DON), an important virulence determinant. This chain is Autophagy-related protein 11, found in Gibberella zeae (strain ATCC MYA-4620 / CBS 123657 / FGSC 9075 / NRRL 31084 / PH-1) (Wheat head blight fungus).